A 172-amino-acid polypeptide reads, in one-letter code: Type IV secretion system putative outer membrane lipoprotein BRA0058/BS1330_II0058 (172 aa).

A signal peptide spans 1–15 (MRTLVMVACAVSLAA). A lipid anchor (N-palmitoyl cysteine) is attached at C16. C16 is lipidated: S-diacylglycerol cysteine. The region spanning 58-172 (WPARPPKQTV…RRVDIEILRK (115 aa)) is the OmpA-like domain.

It localises to the cell outer membrane. In terms of biological role, the VirB system could be required for the establishment of the replication niche in the host. The sequence is that of Type IV secretion system putative outer membrane lipoprotein BRA0058/BS1330_II0058 from Brucella suis biovar 1 (strain 1330).